Here is a 336-residue protein sequence, read N- to C-terminus: Inositol 2-dehydrogenase (336 aa).

This sequence belongs to the Gfo/Idh/MocA family. In terms of assembly, homotetramer.

The catalysed reaction is myo-inositol + NAD(+) = scyllo-inosose + NADH + H(+). Functionally, involved in the oxidation of myo-inositol (MI) to 2-keto-myo-inositol (2KMI or 2-inosose). The protein is Inositol 2-dehydrogenase of Paracoccus denitrificans (strain Pd 1222).